We begin with the raw amino-acid sequence, 184 residues long: Oligoribonuclease (184 aa).

Positions 7–170 (LIWIDLEMTG…DDIYESIEEL (164 aa)) constitute an Exonuclease domain. Residue tyrosine 128 is part of the active site.

The protein belongs to the oligoribonuclease family.

The protein localises to the cytoplasm. 3'-to-5' exoribonuclease specific for small oligoribonucleotides. The polypeptide is Oligoribonuclease (Hydrogenovibrio crunogenus (strain DSM 25203 / XCL-2) (Thiomicrospira crunogena)).